We begin with the raw amino-acid sequence, 257 residues long: 3-methyl-2-oxobutanoate hydroxymethyltransferase (257 aa).

Mg(2+) is bound by residues Asp42 and Asp86. Residues 42–43 (DS), Asp86, and Lys116 contribute to the 3-methyl-2-oxobutanoate site. A Mg(2+)-binding site is contributed by Glu118. Residue Glu185 is the Proton acceptor of the active site.

The protein belongs to the PanB family. Homodecamer; pentamer of dimers. Requires Mg(2+) as cofactor.

It is found in the cytoplasm. The catalysed reaction is 3-methyl-2-oxobutanoate + (6R)-5,10-methylene-5,6,7,8-tetrahydrofolate + H2O = 2-dehydropantoate + (6S)-5,6,7,8-tetrahydrofolate. Its pathway is cofactor biosynthesis; (R)-pantothenate biosynthesis; (R)-pantoate from 3-methyl-2-oxobutanoate: step 1/2. Its function is as follows. Catalyzes the reversible reaction in which hydroxymethyl group from 5,10-methylenetetrahydrofolate is transferred onto alpha-ketoisovalerate to form ketopantoate. In Prochlorococcus marinus (strain MIT 9301), this protein is 3-methyl-2-oxobutanoate hydroxymethyltransferase.